A 392-amino-acid polypeptide reads, in one-letter code: Queuine tRNA-ribosyltransferase (392 aa).

Asp-93 functions as the Proton acceptor in the catalytic mechanism. Substrate contacts are provided by residues Asp-93–Tyr-97, Asp-147, Gln-189, and Gly-216. The segment at Gly-247–Asp-253 is RNA binding. Asp-266 functions as the Nucleophile in the catalytic mechanism. The RNA binding; important for wobble base 34 recognition stretch occupies residues Thr-271–Arg-275. Positions 304, 306, 309, and 335 each coordinate Zn(2+).

Belongs to the queuine tRNA-ribosyltransferase family. As to quaternary structure, homodimer. Within each dimer, one monomer is responsible for RNA recognition and catalysis, while the other monomer binds to the replacement base PreQ1. The cofactor is Zn(2+).

The enzyme catalyses 7-aminomethyl-7-carbaguanine + guanosine(34) in tRNA = 7-aminomethyl-7-carbaguanosine(34) in tRNA + guanine. Its pathway is tRNA modification; tRNA-queuosine biosynthesis. Functionally, catalyzes the base-exchange of a guanine (G) residue with the queuine precursor 7-aminomethyl-7-deazaguanine (PreQ1) at position 34 (anticodon wobble position) in tRNAs with GU(N) anticodons (tRNA-Asp, -Asn, -His and -Tyr). Catalysis occurs through a double-displacement mechanism. The nucleophile active site attacks the C1' of nucleotide 34 to detach the guanine base from the RNA, forming a covalent enzyme-RNA intermediate. The proton acceptor active site deprotonates the incoming PreQ1, allowing a nucleophilic attack on the C1' of the ribose to form the product. After dissociation, two additional enzymatic reactions on the tRNA convert PreQ1 to queuine (Q), resulting in the hypermodified nucleoside queuosine (7-(((4,5-cis-dihydroxy-2-cyclopenten-1-yl)amino)methyl)-7-deazaguanosine). This is Queuine tRNA-ribosyltransferase from Dehalococcoides mccartyi (strain ATCC BAA-2100 / JCM 16839 / KCTC 5957 / BAV1).